The sequence spans 187 residues: UPF0301 protein VF_0434 (187 aa).

The protein belongs to the UPF0301 (AlgH) family.

The chain is UPF0301 protein VF_0434 from Aliivibrio fischeri (strain ATCC 700601 / ES114) (Vibrio fischeri).